Here is a 297-residue protein sequence, read N- to C-terminus: MPTLFALKERIAQVVQEKNDPIVTAVATTLAEQQYNACFSAEQVKLWKRQFKCSSVELALACLPIAACYALVPISNFYVGAVAIGESGRFYFGANQEFNAQAIQQTVHAEQSAISHAWLAGETAITDMVVNYTPCGHCRQFMNELNSAKTLKIHLPHSQNNLLRQYLPDSFGPKDLNIEKVLFDQQTHSLPLRGDLLTQAAIQTAAQSYAPYSKSLSGIALQVGEQIICGRYAENAAFNPSFLPLQSALNYRRLSGKSDERISRIVMAESKGTTSHRQMSEALAESFLGLNLEYIEV.

CMP/dCMP-type deaminase domains are found at residues S54 to K174 and L192 to V297. N95–E97 is a binding site for substrate. Zn(2+) is bound at residue H108. Catalysis depends on E110, which acts as the Proton donor. The Zn(2+) site is built by C135 and C138.

This sequence belongs to the cytidine and deoxycytidylate deaminase family. In terms of assembly, homodimer. The cofactor is Zn(2+).

The catalysed reaction is cytidine + H2O + H(+) = uridine + NH4(+). The enzyme catalyses 2'-deoxycytidine + H2O + H(+) = 2'-deoxyuridine + NH4(+). This enzyme scavenges exogenous and endogenous cytidine and 2'-deoxycytidine for UMP synthesis. This chain is Cytidine deaminase, found in Actinobacillus pleuropneumoniae serotype 5b (strain L20).